The following is a 340-amino-acid chain: Phospho-N-acetylmuramoyl-pentapeptide-transferase (340 aa).

The next 9 helical transmembrane spans lie at 24 to 44, 69 to 89, 95 to 115, 129 to 149, 156 to 176, 196 to 216, 235 to 255, 260 to 280, and 316 to 336; these read VPFGLSVLGSALLGSLLLPVL, TMGGLSFLPVGLLVAGIGSGW, AVALLTLAYTVVGWLDDWLVI, LLLQVGIGLVFCGYLAWQGIP, GIGALPLGWLFWPLALFVLVG, ALVLAGLGLTAADPVLALVAF, LFMGDTGSLGLGGALAGLALL, WALAWMGAVLVAEALSVILQV, and VVGCFYGLTALLVGLGWAWWH.

It belongs to the glycosyltransferase 4 family. MraY subfamily. It depends on Mg(2+) as a cofactor.

The protein resides in the cell inner membrane. It catalyses the reaction UDP-N-acetyl-alpha-D-muramoyl-L-alanyl-gamma-D-glutamyl-meso-2,6-diaminopimeloyl-D-alanyl-D-alanine + di-trans,octa-cis-undecaprenyl phosphate = di-trans,octa-cis-undecaprenyl diphospho-N-acetyl-alpha-D-muramoyl-L-alanyl-D-glutamyl-meso-2,6-diaminopimeloyl-D-alanyl-D-alanine + UMP. Its pathway is cell wall biogenesis; peptidoglycan biosynthesis. Its function is as follows. Catalyzes the initial step of the lipid cycle reactions in the biosynthesis of the cell wall peptidoglycan: transfers peptidoglycan precursor phospho-MurNAc-pentapeptide from UDP-MurNAc-pentapeptide onto the lipid carrier undecaprenyl phosphate, yielding undecaprenyl-pyrophosphoryl-MurNAc-pentapeptide, known as lipid I. This Synechococcus sp. (strain JA-3-3Ab) (Cyanobacteria bacterium Yellowstone A-Prime) protein is Phospho-N-acetylmuramoyl-pentapeptide-transferase.